The chain runs to 324 residues: T-cell acute lymphocytic leukemia protein 1 homolog (324 aa).

Residues 1-49 form a disordered region; it reads MMEKLKSEQFPLSPSAEGCASPPRGDGDARGKQEGTTAETGEHRLPEEL. The bHLH domain occupies 185-237; the sequence is VRRIFTNSRERWRQQNVNGAFAELRKLIPTHPPDKKLSKNEILRLAMKYINFL. The tract at residues 276–324 is disordered; it reads SPNSSCGSLLDGDASPESFTEDQDSSVESRPSARGLHHSSLPLDGNAQR.

As to expression, expressed in hemopoietic and endothelial lineages. Isoform beta emerges first, expressing in the entire anterior and posterior lateral mesoderm (ALM and PLM respectively), and in the ventral wall of the dorsal aorta, where definitive hemopoiesis begins. Isoform alpha expresses later as two pairs of stripes in the PLM and ALM, and becomes restricted to the intermediate cell mass (ICM) by the 18-somite stage. The ICM is the key site of primitive hemopoiesis, giving rise to the erythroid lineage. Also expressed in all stages of endocardial cell migration and in the developing midbrain, hindbrain and spinal cord. In adults, expressed in the main hemopoietic organs, namely the kidney (where isoform alpha is the predominant isoform) and the spleen. Also expressed in the liver, gill and gonads.

Its subcellular location is the nucleus. Its function is as follows. Transcription factor that plays a pivotal role in hemopoietic and endothelial development, acting synergistically with lmo2 and downstream of clo. Specifies mesodermal precursors to a hemangioblast cell fate. Hemangioblasts are bipotential precursors of blood and endothelium, and in the absence of hemopoietic induction cues such as gata1, tal1/scl-lmo2-induced hemangioblasts differentiate into endothelial cells. Isoform alpha and isoform beta are redundant for the initiation of primitive hemopoiesis but have distinct roles in the regulation of primitive erythroid differentiation and definitive hemopoietic stem cell specification, most likely due to differences in expression levels. Specification of definitive hemopoietic stem cells requires isoform beta. DNA binding is required for erythroid maturation, but not for its other hemopoietic functions. Endothelial roles include development of the dorsal aorta, the site of definitive hemopoiesis in the embryo. Required for angiogenesis but not angioblast specification. Has an additional role in endocardium formation during heart development. May play a role in central nervous system development. The chain is T-cell acute lymphocytic leukemia protein 1 homolog from Danio rerio (Zebrafish).